We begin with the raw amino-acid sequence, 757 residues long: Catalase-peroxidase (757 aa).

Positions 101 to 248 (WHSAGTYRIG…LAAVQMGLIY (148 aa)) form a cross-link, tryptophyl-tyrosyl-methioninium (Trp-Tyr) (with M-274). Catalysis depends on His102, which acts as the Proton acceptor. Residues 210 to 231 (SEGVHHPDEHSGAKEKASKNSD) form a disordered region. Residues 212–231 (GVHHPDEHSGAKEKASKNSD) show a composition bias toward basic and acidic residues. The tryptophyl-tyrosyl-methioninium (Tyr-Met) (with W-101) cross-link spans 248-274 (YVNPEGPDGRPDPLASARDIRETFARM). His289 serves as a coordination point for heme b. Residues 293–312 (KTHGAAPADNVGPEPEAGEL) are disordered.

It belongs to the peroxidase family. Peroxidase/catalase subfamily. Homodimer or homotetramer. Heme b serves as cofactor. Formation of the three residue Trp-Tyr-Met cross-link is important for the catalase, but not the peroxidase activity of the enzyme.

The enzyme catalyses H2O2 + AH2 = A + 2 H2O. The catalysed reaction is 2 H2O2 = O2 + 2 H2O. Its function is as follows. Bifunctional enzyme with both catalase and broad-spectrum peroxidase activity. In Xylella fastidiosa (strain M12), this protein is Catalase-peroxidase.